A 396-amino-acid chain; its full sequence is Chaperone protein DnaJ 1 (396 aa).

The J domain maps to 10–75 (DYYKVLGVPK…KKRKEYDEAR (66 aa)). The span at 127–137 (LFNRGGAGPGT) shows a compositional bias: gly residues. The interval 127 to 149 (LFNRGGAGPGTGTRTQPRRGQDI) is disordered. The CR-type zinc-finger motif lies at 163–241 (GATVPLRMSS…CKGSGRAKSS (79 aa)). The Zn(2+) site is built by Cys-176, Cys-179, Cys-192, Cys-195, Cys-215, Cys-218, Cys-229, and Cys-232. CXXCXGXG motif repeat units follow at residues 176–183 (CKACSGTG), 192–199 (CPTCVGTG), 215–222 (CPDCKGRG), and 229–236 (CEICKGSG).

Belongs to the DnaJ family. Homodimer. It depends on Zn(2+) as a cofactor.

It localises to the cytoplasm. Its function is as follows. Participates actively in the response to hyperosmotic and heat shock by preventing the aggregation of stress-denatured proteins and by disaggregating proteins, also in an autonomous, DnaK-independent fashion. Unfolded proteins bind initially to DnaJ; upon interaction with the DnaJ-bound protein, DnaK hydrolyzes its bound ATP, resulting in the formation of a stable complex. GrpE releases ADP from DnaK; ATP binding to DnaK triggers the release of the substrate protein, thus completing the reaction cycle. Several rounds of ATP-dependent interactions between DnaJ, DnaK and GrpE are required for fully efficient folding. Also involved, together with DnaK and GrpE, in the DNA replication of plasmids through activation of initiation proteins. This is Chaperone protein DnaJ 1 from Streptomyces avermitilis (strain ATCC 31267 / DSM 46492 / JCM 5070 / NBRC 14893 / NCIMB 12804 / NRRL 8165 / MA-4680).